A 321-amino-acid polypeptide reads, in one-letter code: Tetraacyldisaccharide 4'-kinase (321 aa).

An ATP-binding site is contributed by Ser54–Thr61.

The protein belongs to the LpxK family.

It catalyses the reaction a lipid A disaccharide + ATP = a lipid IVA + ADP + H(+). It participates in glycolipid biosynthesis; lipid IV(A) biosynthesis; lipid IV(A) from (3R)-3-hydroxytetradecanoyl-[acyl-carrier-protein] and UDP-N-acetyl-alpha-D-glucosamine: step 6/6. Functionally, transfers the gamma-phosphate of ATP to the 4'-position of a tetraacyldisaccharide 1-phosphate intermediate (termed DS-1-P) to form tetraacyldisaccharide 1,4'-bis-phosphate (lipid IVA). The polypeptide is Tetraacyldisaccharide 4'-kinase (Rickettsia bellii (strain OSU 85-389)).